The primary structure comprises 512 residues: Methionine--tRNA ligase (512 aa).

The 'HIGH' region motif lies at 11-21; sequence YYASGKPHIGH. Cys-126, Cys-129, Cys-143, and His-147 together coordinate Zn(2+). The 'KMSKS' region motif lies at 301–305; that stretch reads KMSKS. Lys-304 lines the ATP pocket.

This sequence belongs to the class-I aminoacyl-tRNA synthetase family. MetG type 2A subfamily. In terms of assembly, monomer. It depends on Zn(2+) as a cofactor.

It is found in the cytoplasm. The enzyme catalyses tRNA(Met) + L-methionine + ATP = L-methionyl-tRNA(Met) + AMP + diphosphate. Is required not only for elongation of protein synthesis but also for the initiation of all mRNA translation through initiator tRNA(fMet) aminoacylation. The chain is Methionine--tRNA ligase (metG) from Mycoplasma pneumoniae (strain ATCC 29342 / M129 / Subtype 1) (Mycoplasmoides pneumoniae).